The sequence spans 668 residues: UvrABC system protein B (668 aa).

The Helicase ATP-binding domain occupies 27–413 (AGVQAGHRFQ…STQVVEQIIR (387 aa)). 40–47 (GATGTGKT) serves as a coordination point for ATP. Positions 93-116 (YYDYYQPEAYIPVTDTYIEKSASI) match the Beta-hairpin motif. Residues 430-596 (QVDDLYGEIR…PIVKKTSNAI (167 aa)) enclose the Helicase C-terminal domain. A UVR domain is found at 628–663 (PPLIQDLEAKMKAAAQELAFEEAARYRDQIKRLRDR).

This sequence belongs to the UvrB family. In terms of assembly, forms a heterotetramer with UvrA during the search for lesions. Interacts with UvrC in an incision complex.

Its subcellular location is the cytoplasm. The UvrABC repair system catalyzes the recognition and processing of DNA lesions. A damage recognition complex composed of 2 UvrA and 2 UvrB subunits scans DNA for abnormalities. Upon binding of the UvrA(2)B(2) complex to a putative damaged site, the DNA wraps around one UvrB monomer. DNA wrap is dependent on ATP binding by UvrB and probably causes local melting of the DNA helix, facilitating insertion of UvrB beta-hairpin between the DNA strands. Then UvrB probes one DNA strand for the presence of a lesion. If a lesion is found the UvrA subunits dissociate and the UvrB-DNA preincision complex is formed. This complex is subsequently bound by UvrC and the second UvrB is released. If no lesion is found, the DNA wraps around the other UvrB subunit that will check the other stand for damage. The chain is UvrABC system protein B from Thermosynechococcus vestitus (strain NIES-2133 / IAM M-273 / BP-1).